Consider the following 404-residue polypeptide: Keratin, type I cuticular Ha3-I (404 aa).

Positions 1 to 56 (MPYNCCLPAMSCRTSCSSRPCVPPSCHGCTLPGACNIPANVGNCNWFCEGSFNGNE) are head. An IF rod domain is found at 56 to 367 (EKETMQFLND…GLLESEDCKL (312 aa)). Residues 57–91 (KETMQFLNDRLASYMEKVRQLERENAELECRIQER) are coil 1A. The interval 92–102 (NQQQDPLVCPA) is linker 1. The coil 1B stretch occupies residues 103-203 (YQAYFRTIEE…HEQEVNTLRC (101 aa)). The interval 204–219 (QLGDRLNVEVDAAPTV) is linker 12. The coil 2 stretch occupies residues 220 to 363 (DLNRVLNETR…NTYRGLLESE (144 aa)). The segment at 364 to 404 (DCKLPCNPCATTNACDKPIGPCVPNPCVTRPRCGPCNTFVR) is tail.

It belongs to the intermediate filament family.

The polypeptide is Keratin, type I cuticular Ha3-I (Mus musculus (Mouse)).